We begin with the raw amino-acid sequence, 318 residues long: UDP-N-acetylenolpyruvoylglucosamine reductase (318 aa).

One can recognise an FAD-binding PCMH-type domain in the interval 38–204 (IGGICPVVVE…LGIEILLKEG (167 aa)). Arg182 is an active-site residue. The interval 212–232 (SLKDKRDRRNSSQPENKKSAG) is disordered. Positions 213–229 (LKDKRDRRNSSQPENKK) are enriched in basic and acidic residues. The active-site Proton donor is Ser233. Glu310 is a catalytic residue.

Belongs to the MurB family. It depends on FAD as a cofactor.

The protein localises to the cytoplasm. It catalyses the reaction UDP-N-acetyl-alpha-D-muramate + NADP(+) = UDP-N-acetyl-3-O-(1-carboxyvinyl)-alpha-D-glucosamine + NADPH + H(+). Its pathway is cell wall biogenesis; peptidoglycan biosynthesis. Its function is as follows. Cell wall formation. The chain is UDP-N-acetylenolpyruvoylglucosamine reductase from Leptospira borgpetersenii serovar Hardjo-bovis (strain L550).